Consider the following 97-residue polypeptide: Defensin-like protein 196 (97 aa).

A signal peptide spans 1–28 (MAKMSALSIFAIFIILVLVIFEIPEIEA). Disulfide bonds link Cys-33/Cys-85, Cys-46/Cys-70, Cys-55/Cys-80, and Cys-59/Cys-82.

This sequence belongs to the DEFL family. Protease inhibitor I18 (RTI/MTI-2) subfamily.

The protein resides in the secreted. This chain is Defensin-like protein 196 (ATTI4), found in Arabidopsis thaliana (Mouse-ear cress).